The primary structure comprises 170 residues: Lipoprotein signal peptidase (170 aa).

The next 3 helical transmembrane spans lie at 13–33, 72–92, and 96–113; these read IFIS…VKYI, LFFL…ALKE, and IARI…GNII. Active-site residues include aspartate 124 and aspartate 146. The chain crosses the membrane as a helical span at residues 142–162; the sequence is FNFADSYVVIGITLFIIYDLF.

This sequence belongs to the peptidase A8 family.

It localises to the cell inner membrane. It catalyses the reaction Release of signal peptides from bacterial membrane prolipoproteins. Hydrolyzes -Xaa-Yaa-Zaa-|-(S,diacylglyceryl)Cys-, in which Xaa is hydrophobic (preferably Leu), and Yaa (Ala or Ser) and Zaa (Gly or Ala) have small, neutral side chains.. It participates in protein modification; lipoprotein biosynthesis (signal peptide cleavage). This protein specifically catalyzes the removal of signal peptides from prolipoproteins. The chain is Lipoprotein signal peptidase from Borrelia turicatae (strain 91E135).